A 251-amino-acid chain; its full sequence is Adenylate kinase (251 aa).

46–51 contacts ATP; it reads GAGKGT. The interval 66–95 is NMP; that stretch reads ATGDMLRSQVQQQTPLGVEAKKIMDAGGLV. AMP contacts are provided by residues Thr67, Arg72, 93–95, 122–125, and Gln129; these read GLV and GFPR. An LID region spans residues 163–200; that stretch reads GRLVHPASGRSYHKVFNPPKKEMIDDITGEALVQRSDD. ATP is bound by residues Arg164 and 173 to 174; that span reads SY. AMP is bound by residues Arg197 and Arg208. An ATP-binding site is contributed by Gln236.

This sequence belongs to the adenylate kinase family. AK2 subfamily. In terms of assembly, monomer.

The protein resides in the cytoplasm. It localises to the cytosol. Its subcellular location is the mitochondrion intermembrane space. It carries out the reaction AMP + ATP = 2 ADP. Functionally, catalyzes the reversible transfer of the terminal phosphate group between ATP and AMP. Plays an important role in cellular energy homeostasis and in adenine nucleotide metabolism. Adenylate kinase activity is critical for regulation of the phosphate utilization and the AMP de novo biosynthesis pathways. This chain is Adenylate kinase, found in Yarrowia lipolytica (strain CLIB 122 / E 150) (Yeast).